The chain runs to 292 residues: Large ribosomal subunit protein bL19m (292 aa).

The interval 39-68 is disordered; sequence GPGRRQITGPSEPGVFQPPPKPVIVDKRGP. Ser77 is modified (phosphoserine).

The protein belongs to the bacterial ribosomal protein bL19 family. As to quaternary structure, component of the mitochondrial ribosome large subunit (39S) which comprises a 16S rRNA and about 50 distinct proteins.

The protein localises to the mitochondrion. In Bos taurus (Bovine), this protein is Large ribosomal subunit protein bL19m (MRPL19).